The sequence spans 211 residues: ATP phosphoribosyltransferase (211 aa).

The protein belongs to the ATP phosphoribosyltransferase family. Short subfamily. Heteromultimer composed of HisG and HisZ subunits.

It localises to the cytoplasm. It catalyses the reaction 1-(5-phospho-beta-D-ribosyl)-ATP + diphosphate = 5-phospho-alpha-D-ribose 1-diphosphate + ATP. It participates in amino-acid biosynthesis; L-histidine biosynthesis; L-histidine from 5-phospho-alpha-D-ribose 1-diphosphate: step 1/9. Its function is as follows. Catalyzes the condensation of ATP and 5-phosphoribose 1-diphosphate to form N'-(5'-phosphoribosyl)-ATP (PR-ATP). Has a crucial role in the pathway because the rate of histidine biosynthesis seems to be controlled primarily by regulation of HisG enzymatic activity. The polypeptide is ATP phosphoribosyltransferase (Pseudomonas fluorescens (strain SBW25)).